Consider the following 467-residue polypeptide: Histidine--tRNA ligase (467 aa).

The protein belongs to the class-II aminoacyl-tRNA synthetase family. In terms of assembly, homodimer.

The protein resides in the cytoplasm. It carries out the reaction tRNA(His) + L-histidine + ATP = L-histidyl-tRNA(His) + AMP + diphosphate + H(+). This is Histidine--tRNA ligase from Gloeobacter violaceus (strain ATCC 29082 / PCC 7421).